A 70-amino-acid chain; its full sequence is MPGVKVHPNESFDEAYRRFKKQTDRNLVVTEVRARRFFEPMTEIRKKQKISARKKMLKRLYMLRRYESRL.

The protein belongs to the bacterial ribosomal protein bS21 family.

This is Small ribosomal subunit protein bS21 from Campylobacter fetus subsp. fetus (strain 82-40).